The following is a 182-amino-acid chain: GTP cyclohydrolase 1 (182 aa).

Zn(2+) contacts are provided by cysteine 73, histidine 76, and cysteine 144.

The protein belongs to the GTP cyclohydrolase I family. In terms of assembly, homomer.

It catalyses the reaction GTP + H2O = 7,8-dihydroneopterin 3'-triphosphate + formate + H(+). The protein operates within cofactor biosynthesis; 7,8-dihydroneopterin triphosphate biosynthesis; 7,8-dihydroneopterin triphosphate from GTP: step 1/1. This is GTP cyclohydrolase 1 from Hydrogenobaculum sp. (strain Y04AAS1).